The chain runs to 640 residues: Probable potassium transport system protein Kup 1 (640 aa).

12 helical membrane-spanning segments follow: residues 25-45 (LVLA…LYAL), 65-85 (VVSL…VMVL), 115-135 (AVGW…DGVI), 153-173 (PALA…LFMI), 181-201 (VGAA…ALGL), 227-247 (GFAG…AEAL), 263-283 (WYGL…ALLL), 305-325 (MVAL…TAVF), 353-373 (IYLP…VLGF), 381-401 (AAFG…FAVL), 410-430 (WWAV…FWLA), and 438-458 (GGWL…CWFG).

This sequence belongs to the HAK/KUP transporter (TC 2.A.72) family.

The protein resides in the cell inner membrane. The catalysed reaction is K(+)(in) + H(+)(in) = K(+)(out) + H(+)(out). Its function is as follows. Transport of potassium into the cell. Likely operates as a K(+):H(+) symporter. The chain is Probable potassium transport system protein Kup 1 from Chromobacterium violaceum (strain ATCC 12472 / DSM 30191 / JCM 1249 / CCUG 213 / NBRC 12614 / NCIMB 9131 / NCTC 9757 / MK).